Consider the following 111-residue polypeptide: Probable 4-amino-4-deoxy-L-arabinose-phosphoundecaprenol flippase subunit ArnE (111 aa).

The Cytoplasmic portion of the chain corresponds to 1–35 (MIWLTLVFASLLSVAGQLCQKQATCFAAVNKRRKH). The helical transmembrane segment at 36 to 56 (IVLWLGLALACLGLAMVLWLL) threads the bilayer. An EamA domain is found at 40–109 (LGLALACLGL…IIGGIVILGS (70 aa)). Residues 57-60 (VLQN) lie on the Periplasmic side of the membrane. Residues 61–81 (VPVGIAYPMLSLNFVWVTLAA) traverse the membrane as a helical segment. The Cytoplasmic segment spans residues 82-87 (VKLWHE). Residues 88–108 (PVSLRHWCGVAFIIGGIVILG) traverse the membrane as a helical segment. Residues 109-111 (STV) are Periplasmic-facing.

The protein belongs to the ArnE family. Heterodimer of ArnE and ArnF.

It is found in the cell inner membrane. Its pathway is bacterial outer membrane biogenesis; lipopolysaccharide biosynthesis. Its function is as follows. Translocates 4-amino-4-deoxy-L-arabinose-phosphoundecaprenol (alpha-L-Ara4N-phosphoundecaprenol) from the cytoplasmic to the periplasmic side of the inner membrane. This is Probable 4-amino-4-deoxy-L-arabinose-phosphoundecaprenol flippase subunit ArnE from Escherichia coli (strain UTI89 / UPEC).